A 177-amino-acid chain; its full sequence is Mitochondrial inner membrane protease subunit 2 (177 aa).

Catalysis depends on residues Ser-41 and Lys-91. The chain crosses the membrane as a helical span at residues 134-152 (TFGPISSGLVIGKAITIVW).

Belongs to the peptidase S26 family. IMP2 subfamily. In terms of assembly, component of the mitochondrial inner membrane peptidase (IMP) complex which at least consists of IMP1, IMP2 and SOM1. In terms of processing, the N-terminus is blocked.

The protein resides in the mitochondrion inner membrane. Its function is as follows. Catalytic component of the mitochondrial inner membrane peptidase (IMP) complex. IMP catalyzes the removal of signal peptides required for the targeting of proteins from the mitochondrial matrix, across the inner membrane, into the inter-membrane space. The two catalytic IMP subunits seem to have non-overlapping substrate specificities. IMP2 substrates include nuclear encoded CYB2, mitochondrially encoded COX2 and cytochrome c1. Required for the stability of IMP1. The sequence is that of Mitochondrial inner membrane protease subunit 2 (IMP2) from Saccharomyces cerevisiae (strain ATCC 204508 / S288c) (Baker's yeast).